A 319-amino-acid polypeptide reads, in one-letter code: tRNA dimethylallyltransferase (319 aa).

An ATP-binding site is contributed by 9–16; sequence GPTAVGKS. 11 to 16 is a substrate binding site; the sequence is TAVGKS. An interaction with substrate tRNA region spans residues 39–42; that stretch reads DSMQ.

Belongs to the IPP transferase family. In terms of assembly, monomer. Requires Mg(2+) as cofactor.

It catalyses the reaction adenosine(37) in tRNA + dimethylallyl diphosphate = N(6)-dimethylallyladenosine(37) in tRNA + diphosphate. Functionally, catalyzes the transfer of a dimethylallyl group onto the adenine at position 37 in tRNAs that read codons beginning with uridine, leading to the formation of N6-(dimethylallyl)adenosine (i(6)A). The sequence is that of tRNA dimethylallyltransferase from Thermobifida fusca (strain YX).